A 173-amino-acid chain; its full sequence is ATP-dependent protease subunit HslV (173 aa).

Residue threonine 2 is part of the active site. The Na(+) site is built by glycine 158, aspartate 161, and threonine 164.

This sequence belongs to the peptidase T1B family. HslV subfamily. In terms of assembly, a double ring-shaped homohexamer of HslV is capped on each side by a ring-shaped HslU homohexamer. The assembly of the HslU/HslV complex is dependent on binding of ATP.

The protein localises to the cytoplasm. It catalyses the reaction ATP-dependent cleavage of peptide bonds with broad specificity.. With respect to regulation, allosterically activated by HslU binding. Functionally, protease subunit of a proteasome-like degradation complex believed to be a general protein degrading machinery. In Mannheimia succiniciproducens (strain KCTC 0769BP / MBEL55E), this protein is ATP-dependent protease subunit HslV.